The chain runs to 295 residues: SPX domain-containing protein 1 (295 aa).

The SPX domain maps to 1–166; it reads MKFGKSLSSQ…GALIRLPFIQ (166 aa). The segment at 199-227 is disordered; sequence LSVSSEDGRGDSTNEDKPSNPSSSLVNGG. Basic and acidic residues predominate over residues 204–216; sequence EDGRGDSTNEDKP.

As to quaternary structure, interacts (via SPX domain) with PHR2 (via C-terminus). Interacts with RLI1 in the nucleus to prevents its positive regulation of leaf inclination during phosphate (Pi) starvation. In terms of tissue distribution, predominantly expressed in roots and leaves. Localized in leaves lamina joints.

Its subcellular location is the nucleus. Involved in plant adaptation to phosphate (Pi) starvation. Inhibits PHR2 DNA-binding activity via a Pi-dependent protein interaction. Suppresses the regulation on expression of PT2 by PHR2 and accumulation of shoot Pi. Optimizes growth under phosphate-limited conditions through a negative feedback loop of the PSI (phosphate starvation-induced) signaling pathway. Regulates the expression of SPX2, SPX3 and SPX5. May be an important link between signal transduction pathways related to phosphate starvation and cold stress. Together with SPX2, plays a negative role in the regulation of leaf inclination by preventing RLI1 transcription factor activity in Pi depleted conditions. The chain is SPX domain-containing protein 1 from Oryza sativa subsp. japonica (Rice).